A 971-amino-acid chain; its full sequence is Exportin-2 (971 aa).

Residue Met1 is modified to N-acetylmethionine. The Importin N-terminal domain maps to 29–102 (AEKFLESVEG…KANIVHLMLS (74 aa)). Position 112 is a phosphoserine (Ser112). N6-acetyllysine is present on residues Lys574 and Lys824. Ser931 is subject to Phosphoserine.

The protein belongs to the XPO2/CSE1 family. In terms of assembly, found in a complex with CSE1L/XPO2, Ran and KPNA2. Binds with high affinity to importin-alpha only in the presence of RanGTP. The complex is dissociated by the combined action of RanBP1 and RanGAP1. Interacts with CFTR. Ubiquitous. Detected in embryos from 5 to 17 dpc. Highly expressed in adult testis, heart, brain, lung, liver, skeletal muscle, spleen and kidney.

It localises to the cytoplasm. The protein resides in the nucleus. Export receptor for importin-alpha. Mediates importin-alpha re-export from the nucleus to the cytoplasm after import substrates (cargos) have been released into the nucleoplasm. In the nucleus binds cooperatively to importin-alpha and to the GTPase Ran in its active GTP-bound form. Docking of this trimeric complex to the nuclear pore complex (NPC) is mediated through binding to nucleoporins. Upon transit of a nuclear export complex into the cytoplasm, disassembling of the complex and hydrolysis of Ran-GTP to Ran-GDP (induced by RANBP1 and RANGAP1, respectively) cause release of the importin-alpha from the export receptor. CSE1L/XPO2 then return to the nuclear compartment and mediate another round of transport. The directionality of nuclear export is thought to be conferred by an asymmetric distribution of the GTP- and GDP-bound forms of Ran between the cytoplasm and nucleus. This is Exportin-2 (Cse1l) from Mus musculus (Mouse).